A 160-amino-acid polypeptide reads, in one-letter code: Phosphopantetheine adenylyltransferase (160 aa).

S9 lines the substrate pocket. Residues 9–10 (SF) and H17 each bind ATP. Residues K41, I73, and K87 each contribute to the substrate site. ATP contacts are provided by residues 88 to 90 (GLR), E98, and 122 to 128 (YSFVSSS).

Belongs to the bacterial CoaD family. Homohexamer. Requires Mg(2+) as cofactor.

Its subcellular location is the cytoplasm. The enzyme catalyses (R)-4'-phosphopantetheine + ATP + H(+) = 3'-dephospho-CoA + diphosphate. It participates in cofactor biosynthesis; coenzyme A biosynthesis; CoA from (R)-pantothenate: step 4/5. In terms of biological role, reversibly transfers an adenylyl group from ATP to 4'-phosphopantetheine, yielding dephospho-CoA (dPCoA) and pyrophosphate. The polypeptide is Phosphopantetheine adenylyltransferase (Mycolicibacterium vanbaalenii (strain DSM 7251 / JCM 13017 / BCRC 16820 / KCTC 9966 / NRRL B-24157 / PYR-1) (Mycobacterium vanbaalenii)).